The following is a 348-amino-acid chain: Rhodopsin (348 aa).

Position 1 is an N-acetylmethionine (methionine 1). The Extracellular segment spans residues 1–36 (MNGTEGPNFYVPFSNATGVVRSPFEYPQYYLAEPWQ). Residues asparagine 2 and asparagine 15 are each glycosylated (N-linked (GlcNAc...) asparagine). Residues 37–61 (FSMLAAYMFLLIVLGFPINFLTLYV) form a helical membrane-spanning segment. The Cytoplasmic segment spans residues 62-73 (TVQHKKLRTPLN). Residues 74–96 (YILLNLAVADLFMVFGGFTTTLY) traverse the membrane as a helical segment. Topologically, residues 97-110 (TSLHGYFVFGPTGC) are extracellular. Cysteines 110 and 187 form a disulfide. Residues 111-133 (NLEGFFATLGGEIALWSLVVLAI) traverse the membrane as a helical segment. Positions 134-136 (ERY) match the 'Ionic lock' involved in activated form stabilization motif. Topologically, residues 134–152 (ERYVVICKPMSNFRFGENH) are cytoplasmic. The helical transmembrane segment at 153–173 (AIMGVVFTWIMALACAAPPLV) threads the bilayer. Residues 174-202 (GWSRYIPEGMQCSCGVDYYTLKPEVNNES) are Extracellular-facing. Residue glutamate 201 participates in Zn(2+) binding. Residues 203-224 (FVIYMFVVHFTIPLIVIFFCYG) traverse the membrane as a helical segment. At 225–252 (QLVFTVKEAAAQQQESATTQKAEKEVTR) the chain is on the cytoplasmic side. A helical transmembrane segment spans residues 253–274 (MVILMVVFFLICWFPYAGVAFY). At 275-286 (IFTHQGSNFGPI) the chain is on the extracellular side. Zn(2+) is bound at residue glutamine 279. The helical transmembrane segment at 287 to 308 (FMTLPAFFAKSSSIYNPVIYIM) threads the bilayer. Lysine 296 bears the N6-(retinylidene)lysine mark. Residues 309–348 (MNKQFRNCMLTTLCCGKNILGDDEASATASKTETSQVAPA) lie on the Cytoplasmic side of the membrane. 2 S-palmitoyl cysteine lipidation sites follow: cysteine 322 and cysteine 323. The segment at 330–348 (DDEASATASKTETSQVAPA) is interaction with SAG. Residue serine 334 is modified to Phosphoserine. Phosphothreonine is present on threonine 336. Serine 338 is modified (phosphoserine). Phosphothreonine occurs at positions 340 and 342. Serine 343 is modified (phosphoserine).

The protein belongs to the G-protein coupled receptor 1 family. Opsin subfamily. As to quaternary structure, homodimer. May form a complex composed of RHO, GRK1 and RCVRN in a Ca(2+)-dependent manner; RCVRN prevents the interaction between GRK1 and RHO. Interacts with GRK1. Interacts (phosphorylated form) with SAG. Interacts with GNAT1. Interacts with GNAT3. SAG and G-proteins compete for a common binding site. Interacts with PRCD; the interaction promotes PRCD stability. Forms a complex with ASAP1 and ARF4. Forms a complex with ASAP1, RAB11A, Rabin8/RAB3IP, ARF4 and RAB11FIP3; the complex regulates Golgi-to-cilia rhodopsin/RHO transport in photoreceptors. In terms of processing, phosphorylated on some or all of the serine and threonine residues present in the C-terminal region. Contains one covalently linked retinal chromophore. Upon light absorption, the covalently bound 11-cis-retinal is converted to all-trans-retinal. After hydrolysis of the Schiff base and release of the covalently bound all-trans-retinal, active rhodopsin is regenerated by binding of a fresh molecule of 11-cis-retinal.

Its subcellular location is the membrane. It localises to the cell projection. The protein resides in the cilium. It is found in the photoreceptor outer segment. In terms of biological role, photoreceptor required for image-forming vision at low light intensity. Required for photoreceptor cell viability after birth. Light-induced isomerization of 11-cis to all-trans retinal triggers a conformational change that activates signaling via G-proteins. Subsequent receptor phosphorylation mediates displacement of the bound G-protein alpha subunit by the arrestin SAG and terminates signaling. In Cricetulus griseus (Chinese hamster), this protein is Rhodopsin (RHO).